Consider the following 342-residue polypeptide: MDMKQALNRIASNLDLSRDEMKDVMRIVMNGEATDAQIGAFLMGLRLKSETIDEITGATEVMRELATGVTVNAEPLVDIVGTGGDGANLFNVSSAASFVVAAAGGYVAKHGNRGVSSKSGSADLIEKAGINLNMKPEEVARCVEQIGVGFMFAPAHHGAMKHAIGPRRELGCRTIFNILGPMTNPAGVTRQLIGVFTRELCRPMAEVLQRLGAEHIMVVCSKDGLDEISLATVTHVAELKDGEITEYDLTPEDLGIKSQSLVGLSVDGADESLALIKAAFGRSHDETTEKARDMIALNAGAAIYVAGLARTAKEGVDMALDAMGSGLAAGKMSELADFSQCF.

5-phospho-alpha-D-ribose 1-diphosphate contacts are provided by residues Gly-81, 84–85, 91–94, 109–117, and Ser-121; these read GD, NVSS, and KHGNRGVSS. Gly-81 serves as a coordination point for anthranilate. Ser-93 is a binding site for Mg(2+). An anthranilate-binding site is contributed by Asn-112. Residue Arg-167 coordinates anthranilate. Positions 226 and 227 each coordinate Mg(2+).

This sequence belongs to the anthranilate phosphoribosyltransferase family. As to quaternary structure, homodimer. It depends on Mg(2+) as a cofactor.

It carries out the reaction N-(5-phospho-beta-D-ribosyl)anthranilate + diphosphate = 5-phospho-alpha-D-ribose 1-diphosphate + anthranilate. It participates in amino-acid biosynthesis; L-tryptophan biosynthesis; L-tryptophan from chorismate: step 2/5. Its function is as follows. Catalyzes the transfer of the phosphoribosyl group of 5-phosphorylribose-1-pyrophosphate (PRPP) to anthranilate to yield N-(5'-phosphoribosyl)-anthranilate (PRA). The polypeptide is Anthranilate phosphoribosyltransferase (Marinobacter nauticus (strain ATCC 700491 / DSM 11845 / VT8) (Marinobacter aquaeolei)).